We begin with the raw amino-acid sequence, 274 residues long: Putative outer membrane protein CPn_1073/CP_0776/CPj1073/CpB1118 (274 aa).

Positions 1–21 are cleaved as a signal peptide; that stretch reads MRRYLFMVLALCLYRAAPLEA.

It is found in the cell outer membrane. The polypeptide is Putative outer membrane protein CPn_1073/CP_0776/CPj1073/CpB1118 (Chlamydia pneumoniae (Chlamydophila pneumoniae)).